The chain runs to 439 residues: Phosphoribosylamine--glycine ligase (439 aa).

Residues 109-317 (REFMERNKIP…LVEISERIID (209 aa)) enclose the ATP-grasp domain. ATP is bound at residue 136 to 195 (IDEFGKPVVVKPLGLTGGKGVKVVGYQLKDNEEAKEYAEYLIRKDGKVLIEERTDGVEFT). The Mg(2+) site is built by Gln-275, Glu-287, and Asn-289. Mn(2+) contacts are provided by Gln-275, Glu-287, and Asn-289.

The protein belongs to the GARS family. It depends on Mg(2+) as a cofactor. Requires Mn(2+) as cofactor.

The catalysed reaction is 5-phospho-beta-D-ribosylamine + glycine + ATP = N(1)-(5-phospho-beta-D-ribosyl)glycinamide + ADP + phosphate + H(+). The protein operates within purine metabolism; IMP biosynthesis via de novo pathway; N(1)-(5-phospho-D-ribosyl)glycinamide from 5-phospho-alpha-D-ribose 1-diphosphate: step 2/2. The sequence is that of Phosphoribosylamine--glycine ligase from Pyrococcus furiosus (strain ATCC 43587 / DSM 3638 / JCM 8422 / Vc1).